We begin with the raw amino-acid sequence, 364 residues long: Protein FAM81A (364 aa).

Residues 80–107 (IRNITAIVKQLNRDIEVLQEQIRARDNI) adopt a coiled-coil conformation. Residues 275 to 300 (ARLDKIEESQRRNAEGQRKPEEEKVH) are compositionally biased toward basic and acidic residues. The tract at residues 275-301 (ARLDKIEESQRRNAEGQRKPEEEKVHG) is disordered.

The protein belongs to the FAM81 family. In terms of assembly, interacts with DLG4/PSD-95, GRIN2B/GLUN2B and SYNGAP1; the interactions facilitate condensate formation. In terms of tissue distribution, highly expressed in brain (at protein level).

The protein localises to the postsynaptic density. It localises to the cytoplasm. Its function is as follows. Facilitates the interaction and assembly of proteins within the postsynaptic density by promoting the condensation of postsynaptic proteins via liquid-liquid phase separation. Required for neuronal activity. Accumulation at the postsynaptic density results in enlargement of dendritic spines. This chain is Protein FAM81A, found in Rattus norvegicus (Rat).